The following is a 513-amino-acid chain: Cyclin-dependent kinase C-2 (513 aa).

Residues 26–325 (FEKLEQIGEG…AKDALDAEYF (300 aa)) form the Protein kinase domain. ATP-binding positions include 32-40 (IGEGTYGQV) and lysine 55. Tyrosine 37 is modified (phosphotyrosine). Aspartate 164 (proton acceptor) is an active-site residue. Phosphothreonine is present on threonine 198. Residues 337 to 513 (LPTYESSHEF…ARNQQYGWQP (177 aa)) form a disordered region. Residues 395-404 (AGPNHPMNNN) show a composition bias toward low complexity. A compositionally biased stretch (polar residues) spans 434–448 (SGNQTGGYNNQSRGG). Composition is skewed to gly residues over residues 461-476 (APYGAGPRGPSGGYGV) and 483-496 (QGGGQYGGSGGSGR).

It belongs to the protein kinase superfamily. CMGC Ser/Thr protein kinase family. CDC2/CDKX subfamily. Interacts with CYCT1-3. In terms of tissue distribution, highly expressed in flowers. Expressed in seedlings, roots, rosettes and stems.

It catalyses the reaction L-seryl-[protein] + ATP = O-phospho-L-seryl-[protein] + ADP + H(+). It carries out the reaction L-threonyl-[protein] + ATP = O-phospho-L-threonyl-[protein] + ADP + H(+). The catalysed reaction is [DNA-directed RNA polymerase] + ATP = phospho-[DNA-directed RNA polymerase] + ADP + H(+). The protein is Cyclin-dependent kinase C-2 (CDKC-2) of Arabidopsis thaliana (Mouse-ear cress).